A 422-amino-acid chain; its full sequence is Protein FAM53B (422 aa).

Phosphoserine occurs at positions 119, 168, 170, 180, 213, and 269. Disordered stretches follow at residues 193 to 225 and 243 to 269; these read GQPC…GRLD and CPPS…RSRS. A compositionally biased stretch (low complexity) spans 244–269; that stretch reads PPSANSTPASTPELARRSSGLARSRS. Residues 282-285 carry the Nuclear localization signal motif; the sequence is KRRR. Phosphoserine occurs at positions 335 and 344.

This sequence belongs to the FAM53 family. As to quaternary structure, interacts with CTNNB1.

The protein resides in the nucleus. Functionally, acts as a regulator of Wnt signaling pathway by regulating beta-catenin (CTNNB1) nuclear localization. The protein is Protein FAM53B of Mus musculus (Mouse).